The sequence spans 354 residues: Homeobox protein Nkx-2.4 (354 aa).

A DNA-binding region (homeobox) is located at residues 189-248 (RRKRRVLFSQAQVYELERRFKQQKYLSAPEREHLASMIHLTPTQVKIWFQNHRYKMKRQA). Residues 246-329 (RQAKDKAAQQ…PALHGPGGGL (84 aa)) form a disordered region. A compositionally biased stretch (pro residues) spans 263 to 272 (GPPPPPPPSP).

This sequence belongs to the NK-2 homeobox family.

The protein resides in the nucleus. Functionally, probable transcription factor. The protein is Homeobox protein Nkx-2.4 (NKX2-4) of Homo sapiens (Human).